Consider the following 343-residue polypeptide: MSDRQAALDMALKQIEKQFGKGSIMKLGEQAERKVSTVSSGSLALDVALGVGGYPRGRIIEIYGPESSGKTTVSLHAIAEVQRQGGQAAFIDAEHAMDPVYAQKLGVNIDELLLSQPDTGEQGLEIAEALVRSGAVDIIVIDSVAALVPKAEIEGDMGDSHVGLQARLMSQALRKLSGAINKSKTIAIFINQIREKVGVMFGNPETTPGGRALKFYSTVRLEVRRAEQLKQGNDIVGNKTKVKVVKNKVAPPFRVAEVDIMYGEGISREGEILDMASELDIVQKSGAWYSYNEERLGQGRENSKQFLKENTDLREEIAFFIREHHGISEDSGAEDMEDPSLLD.

64 to 71 lines the ATP pocket; the sequence is GPESSGKT.

Belongs to the RecA family.

The protein localises to the cytoplasm. Its function is as follows. Can catalyze the hydrolysis of ATP in the presence of single-stranded DNA, the ATP-dependent uptake of single-stranded DNA by duplex DNA, and the ATP-dependent hybridization of homologous single-stranded DNAs. It interacts with LexA causing its activation and leading to its autocatalytic cleavage. In Bacillus cereus (strain ATCC 10987 / NRS 248), this protein is Protein RecA.